The following is a 480-amino-acid chain: MTLSFTARWRDELPATYTALLPTPLKNARLIWYNDKLAQQLAIPASLFDATNGAGVWGGETLLPGMSPVAQVYSGHQFGVWAGQLGDGRGILLGEQLLADGSTLDWHLKGAGLTPYSRMGDGRAVLRSTIRESLASEAMHYLGIPTTRALSIVASDTPVQRETQETGAMLMRLAQSHMRFGHFEHFYYRREPEKVQQLADFAIRHYWPQWQDVAEKYALWFEEVAARTGRLIAEWQTVGFAHGVMNTDNMSILGLTIDYGPFGFLDDYDPGFIGNHSDHQGRYRFDNQPSVALWNLQRLAQTLTPFIEIDALNRALDRYQDALLTHYGQRMRQKLGFFTEQKDDNALLNELFSLMAREGSDYTRTFRMLSHTEQQSASSPLRDTFIDRAAFDAWFDHYRARLRTEAVDDALRQQQMQRVNPAIVLRNWLAQRAIDAAEQGDMAELHRLHEVLRQPFTDRDDDYASRPPEWGKRLEVSCSS.

Residues Gly86, Gly88, Arg89, Lys109, Asp121, Gly122, Arg172, and Arg179 each coordinate ATP. Residue Asp248 is the Proton acceptor of the active site. Positions 249 and 258 each coordinate Mg(2+). Asp258 is an ATP binding site.

This sequence belongs to the SELO family. The cofactor is Mg(2+). It depends on Mn(2+) as a cofactor.

It carries out the reaction L-seryl-[protein] + ATP = 3-O-(5'-adenylyl)-L-seryl-[protein] + diphosphate. The catalysed reaction is L-threonyl-[protein] + ATP = 3-O-(5'-adenylyl)-L-threonyl-[protein] + diphosphate. The enzyme catalyses L-tyrosyl-[protein] + ATP = O-(5'-adenylyl)-L-tyrosyl-[protein] + diphosphate. It catalyses the reaction L-histidyl-[protein] + UTP = N(tele)-(5'-uridylyl)-L-histidyl-[protein] + diphosphate. It carries out the reaction L-seryl-[protein] + UTP = O-(5'-uridylyl)-L-seryl-[protein] + diphosphate. The catalysed reaction is L-tyrosyl-[protein] + UTP = O-(5'-uridylyl)-L-tyrosyl-[protein] + diphosphate. In terms of biological role, nucleotidyltransferase involved in the post-translational modification of proteins. It can catalyze the addition of adenosine monophosphate (AMP) or uridine monophosphate (UMP) to a protein, resulting in modifications known as AMPylation and UMPylation. This is Protein nucleotidyltransferase YdiU from Salmonella newport (strain SL254).